The following is a 1057-amino-acid chain: Carbamoyl phosphate synthase large chain (1057 aa).

Positions 1-401 (MPKRQDIETI…SLLKAIRSLE (401 aa)) are carboxyphosphate synthetic domain. The ATP site is built by Arg-129, Arg-169, Gly-175, Gly-176, Lys-208, Ile-210, Glu-215, Gly-241, Ile-242, His-243, Gln-284, and Glu-298. Residues 133 to 327 (RTLMNDLGVP…IAKLAAKIAI (195 aa)) form the ATP-grasp 1 domain. Residues Gln-284, Glu-298, and Asn-300 each coordinate Mg(2+). Mn(2+)-binding residues include Gln-284, Glu-298, and Asn-300. Residues 402–546 (YGVHHLGLPN…YGTYEYENES (145 aa)) form an oligomerization domain region. The segment at 547 to 929 (VVTEKEKILV…ALFKGLTASG (383 aa)) is carbamoyl phosphate synthetic domain. The region spanning 671 to 861 (EALLHTIDVP…MAQLAMRAII (191 aa)) is the ATP-grasp 2 domain. ATP-binding residues include Arg-707, Arg-746, Leu-748, Glu-752, Gly-777, Val-778, His-779, Ser-780, Gln-820, and Glu-832. Mg(2+)-binding residues include Gln-820, Glu-832, and Asn-834. Positions 820, 832, and 834 each coordinate Mn(2+). An MGS-like domain is found at 930 to 1057 (MEVKDHGTVL…ESMTFTMKNM (128 aa)). The allosteric domain stretch occupies residues 930 to 1057 (MEVKDHGTVL…ESMTFTMKNM (128 aa)).

It belongs to the CarB family. Composed of two chains; the small (or glutamine) chain promotes the hydrolysis of glutamine to ammonia, which is used by the large (or ammonia) chain to synthesize carbamoyl phosphate. Tetramer of heterodimers (alpha,beta)4. Mg(2+) is required as a cofactor. It depends on Mn(2+) as a cofactor.

It carries out the reaction hydrogencarbonate + L-glutamine + 2 ATP + H2O = carbamoyl phosphate + L-glutamate + 2 ADP + phosphate + 2 H(+). The catalysed reaction is hydrogencarbonate + NH4(+) + 2 ATP = carbamoyl phosphate + 2 ADP + phosphate + 2 H(+). The protein operates within amino-acid biosynthesis; L-arginine biosynthesis; carbamoyl phosphate from bicarbonate: step 1/1. It participates in pyrimidine metabolism; UMP biosynthesis via de novo pathway; (S)-dihydroorotate from bicarbonate: step 1/3. Its function is as follows. Large subunit of the glutamine-dependent carbamoyl phosphate synthetase (CPSase). CPSase catalyzes the formation of carbamoyl phosphate from the ammonia moiety of glutamine, carbonate, and phosphate donated by ATP, constituting the first step of 2 biosynthetic pathways, one leading to arginine and/or urea and the other to pyrimidine nucleotides. The large subunit (synthetase) binds the substrates ammonia (free or transferred from glutamine from the small subunit), hydrogencarbonate and ATP and carries out an ATP-coupled ligase reaction, activating hydrogencarbonate by forming carboxy phosphate which reacts with ammonia to form carbamoyl phosphate. In Staphylococcus saprophyticus subsp. saprophyticus (strain ATCC 15305 / DSM 20229 / NCIMB 8711 / NCTC 7292 / S-41), this protein is Carbamoyl phosphate synthase large chain.